The chain runs to 1167 residues: PH and Rap-GAP domain-containing protein DDB_G0271806 (1167 aa).

2 PH domains span residues asparagine 35–leucine 140 and histidine 165–proline 257. Residues glycine 95–serine 160 form a disordered region. The segment covering asparagine 98–threonine 155 has biased composition (low complexity). Disordered regions lie at residues serine 335–leucine 361, tryptophan 376–valine 400, and tyrosine 645–glutamate 734. Positions asparagine 340–glutamine 351 are enriched in low complexity. Residues serine 648 to leucine 676 show a composition bias toward polar residues. Residues glutamate 687–glutamate 732 show a composition bias toward low complexity. A Rap-GAP domain is found at leucine 950 to tyrosine 1162.

The protein is PH and Rap-GAP domain-containing protein DDB_G0271806 of Dictyostelium discoideum (Social amoeba).